The following is a 312-amino-acid chain: Ribonuclease HIII (312 aa).

Residues 95 to 311 (FNCIGSDEAG…REKAQKILKP (217 aa)) enclose the RNase H type-2 domain. A divalent metal cation contacts are provided by Asp101, Glu102, and Asp206.

It belongs to the RNase HII family. RnhC subfamily. The cofactor is Mn(2+). It depends on Mg(2+) as a cofactor.

The protein resides in the cytoplasm. It carries out the reaction Endonucleolytic cleavage to 5'-phosphomonoester.. Its function is as follows. Endonuclease that specifically degrades the RNA of RNA-DNA hybrids. The polypeptide is Ribonuclease HIII (Staphylococcus aureus (strain Mu3 / ATCC 700698)).